Reading from the N-terminus, the 93-residue chain is HssA/B-like protein 23 (93 aa).

This sequence belongs to the hssA/B family.

The protein is HssA/B-like protein 23 (hssl23) of Dictyostelium discoideum (Social amoeba).